The primary structure comprises 648 residues: Threonine--tRNA ligase (648 aa).

Positions 1 to 61 constitute a TGS domain; it reads MINITFPDGA…DTDGSIEIVT (61 aa). The segment at 242 to 540 is catalytic; the sequence is DHRKLGKELD…LIETYKGAFP (299 aa). The Zn(2+) site is built by Cys336, His387, and His517.

It belongs to the class-II aminoacyl-tRNA synthetase family. Homodimer. It depends on Zn(2+) as a cofactor.

The protein resides in the cytoplasm. The enzyme catalyses tRNA(Thr) + L-threonine + ATP = L-threonyl-tRNA(Thr) + AMP + diphosphate + H(+). Catalyzes the attachment of threonine to tRNA(Thr) in a two-step reaction: L-threonine is first activated by ATP to form Thr-AMP and then transferred to the acceptor end of tRNA(Thr). Also edits incorrectly charged L-seryl-tRNA(Thr). The chain is Threonine--tRNA ligase from Streptococcus uberis (strain ATCC BAA-854 / 0140J).